The following is a 345-amino-acid chain: Eukaryotic translation initiation factor 3 subunit F (345 aa).

The MPN domain occupies Val30–Gly166. Residues Gly308 to Ala345 form a disordered region. The span at Gln318–Gly331 shows a compositional bias: gly residues. Positions Asn335–Ala345 are enriched in basic and acidic residues.

The protein belongs to the eIF-3 subunit F family. In terms of assembly, component of the eukaryotic translation initiation factor 3 (eIF-3) complex.

The protein localises to the cytoplasm. Functionally, component of the eukaryotic translation initiation factor 3 (eIF-3) complex, which is involved in protein synthesis of a specialized repertoire of mRNAs and, together with other initiation factors, stimulates binding of mRNA and methionyl-tRNAi to the 40S ribosome. The eIF-3 complex specifically targets and initiates translation of a subset of mRNAs involved in cell proliferation. In Aspergillus terreus (strain NIH 2624 / FGSC A1156), this protein is Eukaryotic translation initiation factor 3 subunit F.